A 990-amino-acid polypeptide reads, in one-letter code: Pentatricopeptide repeat-containing protein At4g33170 (990 aa).

PPR repeat units follow at residues 73–107 (ERFL…DLVS), 109–139 (NSIL…LRQD), 144–178 (SRMT…GLDG), 179–209 (DEFV…MPYR), 210–244 (DVVL…GLNP), 279–313 (EIIF…DVEC), 314–348 (DQVT…GLDL), 349–379 (MLTV…MSER), 380–414 (DLIS…GLKP), 415–450 (DQYT…NNVS), 451–477 (DSFV…LFER), 481–515 (DLVA…GERS), 516–550 (DDFT…GYDL), 551–581 (DLWV…IPVP), 582–616 (DDVA…GVLP), 617–651 (DEFT…NCTN), 652–682 (DPFV…IEMM), 683–717 (NITA…GIKP), 718–753 (DKVT…GIKP), and 754–788 (EIEH…ASAS). Residues 789 to 864 (MYRTLLAACR…DPGFSWIEVK (76 aa)) are type E motif. The segment at 865 to 895 (NKIHIFVVDDRSNRQTELIYRKVKDMIRDIK) is type E(+) motif. Residues 896–990 (QEGYVPETDF…DGICSCGDYW (95 aa)) are type DYW motif.

The protein belongs to the PPR family. PCMP-H subfamily.

This is Pentatricopeptide repeat-containing protein At4g33170 (PCMP-H53) from Arabidopsis thaliana (Mouse-ear cress).